A 929-amino-acid chain; its full sequence is Urea transporter 2 (929 aa).

Residues 1–11 (MSDHPLKEMSD) are compositionally biased toward basic and acidic residues. Residues 1-89 (MSDHPLKEMS…KRRESELPRR (89 aa)) form a disordered region. Low complexity predominate over residues 31-42 (SELSSPTWPSSS). Positions 55–88 (PEEKDLRSSDEDSHIVKIEKPNERSKRRESELPR) are enriched in basic and acidic residues. The next 9 membrane-spanning stretches (helical) occupy residues 133–155 (GAAQVMFVNNPLSGLIIFIGLLI), 162–179 (IAGALGTVVSTLAALALS), 184–204 (AIASGLHGYNGMLVGLLVAVF), 212–232 (WWLLFPVTFASMACPVISSAL), 241–261 (LPVFTLPFNIALTLYLAATGH), 310–330 (GGVILVALFISSPLICLHAAI), 349–371 (IYTGLWSYNCVLSCVAIGGMFYV), 378–399 (LLALVCALFCAYTGAALSNMMA), and 400–420 (VVGVPPGTWAFCLSTLTFLLL). The tract at residues 451-480 (SDEQKPPNGGGGEQSHGGGQRKAEEGSETV) is disordered. The span at 458 to 470 (NGGGGEQSHGGGQ) shows a compositional bias: gly residues. Serine 486 carries the phosphoserine modification. The next 4 helical transmembrane spans lie at 609–629 (GILIVLGLFVQNPWWAISGCL), 647–667 (AIAAGLHGYNGVLVGLLMAVF), 675–695 (WWLLLPVIVMSMTCPILSSAL), and 704–724 (LPVFTLPFNIAVTLYLAATGH). N-linked (GlcNAc...) asparagine glycosylation occurs at asparagine 742. The next 4 helical transmembrane spans lie at 773–793 (GGIFLVALFVSSPLICLHAAI), 812–832 (IYFGLCGFNSTLACIAIGGMF), 841–861 (LLAIACALFAAYLGAALANML), and 863–883 (VFGLPPCTWPFCLSALTFLLL).

This sequence belongs to the urea transporter family. As to quaternary structure, interacts with SNAPIN which enhances its urea transport activity. In terms of tissue distribution, expressed in the inner medulla of the kidney. As to expression, expressed in both the inner and outer renal medulla of the kidney.

The protein localises to the apical cell membrane. It is found in the cell membrane. The catalysed reaction is urea(in) = urea(out). With respect to regulation, inhibited by phloretin. Activated by vasopressin, forskolin, 3-isobutyl-1-methylxanthine (IBMX) and cAMP. Its activity is regulated as follows. Inhibited by phloretin. Inhibited by urea analogs and phloretin and activated by forskolin. With respect to regulation, inhibited by phloretin and activated by forskolin. Mediates the transport of urea driven by a concentration gradient across the cell membrane of the kidney inner medullary collecting duct which is critical to the urinary concentrating mechanism. This chain is Urea transporter 2 (Slc14a2), found in Rattus norvegicus (Rat).